The sequence spans 696 residues: Spermatogenesis-associated protein 21 (696 aa).

Disordered regions lie at residues 1–301 and 329–386; these read MDNR…AAGT and LKAR…SVPT. Over residues 67-86 the composition is skewed to basic and acidic residues; the sequence is KGPRYRDTFKEGPSELRTQE. The segment covering 96–116 has biased composition (polar residues); the sequence is KQSSWVPQEGSQELQAGQDQS. The span at 195–209 shows a compositional bias: basic and acidic residues; it reads GDKRPKEADVPHIRP. A compositionally biased stretch (polar residues) spans 223 to 235; sequence DSSQEAMPPTSTV. Basic and acidic residues predominate over residues 275–287; it reads EVRDIGERREPDR. Low complexity-rich tracts occupy residues 288 to 297 and 339 to 366; these read VQQQPQKPVV and SPRT…SGPS. A coiled-coil region spans residues 424–451; sequence EPEEQSLQKLYQNREKSEEQLTLKQEEA. One can recognise an EF-hand domain in the interval 481–516; that stretch reads VTPAQVEDALMSADVNGDGHVDFKDFLAVMTDTRRF. 5 residues coordinate Ca(2+): Asp-494, Asn-496, Asp-498, His-500, and Asp-505. The segment at 646–696 is disordered; the sequence is KPTNHYVQDQCTTPGLAPDIRSPFFQSRSQGNREHNSDSRKWPSSVPSRTH. Residues 676-686 are compositionally biased toward basic and acidic residues; sequence GNREHNSDSRK.

Its function is as follows. Involved in the differentiation of haploid spermatids. This chain is Spermatogenesis-associated protein 21 (SPATA21), found in Macaca fascicularis (Crab-eating macaque).